We begin with the raw amino-acid sequence, 1041 residues long: Pre-mRNA-splicing factor ATP-dependent RNA helicase DHX16 (1041 aa).

Disordered stretches follow at residues Glu-101–Glu-207 and Leu-371–Ser-391. Residues Ser-103, Ser-106, and Ser-107 each carry the phosphoserine modification. Positions Gln-119–Lys-130 are enriched in basic residues. At Ser-160 the chain carries Phosphoserine. Basic and acidic residues predominate over residues Arg-166–Glu-207. Polar residues predominate over residues Pro-381–Ser-391. In terms of domain architecture, Helicase ATP-binding spans Leu-409–Pro-573. Position 422–429 (Gly-422–Thr-429) interacts with ATP. A DEAH box motif is present at residues Asp-520–His-523. Positions Ser-598 to Gly-771 constitute a Helicase C-terminal domain. Position 712 is a phosphothreonine (Thr-712).

The protein belongs to the DEAD box helicase family. DEAH subfamily. DDX16/PRP8 sub-subfamily. In terms of assembly, component of pre-catalytic spliceosome complexes. Component of the minor spliceosome, which splices U12-type introns. Interacts with GPKOW. Interacts with TRIM6. Interacts with RIGI. In terms of tissue distribution, expressed in the spleen, thyroid and testis. Also expressed in the brain and cerebellum.

It is found in the nucleus. The protein localises to the nucleoplasm. It localises to the cytoplasm. It catalyses the reaction ATP + H2O = ADP + phosphate + H(+). Required for pre-mRNA splicing as a component of the spliceosome. Contributes to pre-mRNA splicing after spliceosome formation and prior to the first transesterification reaction. As a component of the minor spliceosome, involved in the splicing of U12-type introns in pre-mRNAs. Also plays a role in innate antiviral response by acting as a pattern recognition receptor sensing splicing signals in viral RNA. Mechanistically, TRIM6 promotes the interaction between unanchored 'Lys-48'-polyubiquitin chains and DHX16, leading to DHX16 interaction with RIGI and ssRNA to amplify RIGI-dependent innate antiviral immune responses. This is Pre-mRNA-splicing factor ATP-dependent RNA helicase DHX16 (DHX16) from Homo sapiens (Human).